A 189-amino-acid polypeptide reads, in one-letter code: Xanthine phosphoribosyltransferase (189 aa).

Residues Leu-20 and Asn-27 each contribute to the xanthine site. Position 128-132 (128-132 (ANGKA)) interacts with 5-phospho-alpha-D-ribose 1-diphosphate. Lys-156 is a xanthine binding site.

Belongs to the purine/pyrimidine phosphoribosyltransferase family. Xpt subfamily. In terms of assembly, homodimer.

The protein resides in the cytoplasm. The catalysed reaction is XMP + diphosphate = xanthine + 5-phospho-alpha-D-ribose 1-diphosphate. It participates in purine metabolism; XMP biosynthesis via salvage pathway; XMP from xanthine: step 1/1. Its function is as follows. Converts the preformed base xanthine, a product of nucleic acid breakdown, to xanthosine 5'-monophosphate (XMP), so it can be reused for RNA or DNA synthesis. The sequence is that of Xanthine phosphoribosyltransferase from Pseudomonas syringae pv. syringae (strain B728a).